A 566-amino-acid polypeptide reads, in one-letter code: MVSSFPFVYQNMLAKRPYGAYQNVITVSMSWLKIHGSCPHRITDALHRNAQIIPVLEQWRQQGNQVNPSHVRVIIKKLRDSDQSLQALQVSEWMSKEKICNLIPEDFAARLHLIENVVGLEEAEKFFESIPKNARGDSVYTSLLNSYARSDKTLCKAEATFQKMRDLGLLLRPVPYNAMMSLYSALKNREKVEELLLEMKDNDVEADNVTVNNVLKLYSAVCDVTEMEKFLNKWEGIHGIKLEWHTTLDMAKAYLRARSSGKAMKMLRLTEQLVDQKSLKSAYDHLMKLYGEAGNREEVLRVWKLYKSKIGERDNNGYRTVIRSLLKVDDIVGAEEIYKVWESLPLEFDHRIPTMLASGYRDRGMTEKAEKLMNSKTIKDRRMNKPVTPLLEQWGDQMKPSDLKCLIKNLRDSKQFSKALQVSEWMGEKQVCNLYLEDYAARLYLTENVLGLEEAEKYFENIPENMKDYSVYVALLSSYAKSDKNLGNMVDEILREMEENNVDPDLITVNHVLKVYAAESKIQAMEMFMRRWGTEDGIKLERGTMIAMAKAYVKAGLTKKSGRGVW.

9 PPR repeats span residues 136-171 (GDSVYTSLLNSYARSDKTLCKAEATFQKMRDLGLLL), 172-206 (RPVPYNAMMSLYSALKNREKVEELLLEMKDNDVEA), 207-242 (DNVTVNNVLKLYSAVCDVTEMEKFLNKWEGIHGIKL), 243-273 (EWHTTLDMAKAYLRARSSGKAMKMLRLTEQL), 279-309 (LKSAYDHLMKLYGEAGNREEVLRVWKLYKSK), 314-348 (DNNGYRTVIRSLLKVDDIVGAEEIYKVWESLPLEF), 349-385 (DHRIPTMLASGYRDRGMTEKAEKLMNSKTIKDRRMNK), 468-504 (DYSVYVALLSSYAKSDKNLGNMVDEILREMEENNVDP), and 505-540 (DLITVNHVLKVYAAESKIQAMEMFMRRWGTEDGIKL).

This sequence belongs to the PPR family. P subfamily.

The polypeptide is Putative pentatricopeptide repeat-containing protein At1g28020 (Arabidopsis thaliana (Mouse-ear cress)).